Consider the following 784-residue polypeptide: Transcriptional activator somA (784 aa).

Residues 43-75 (MINNLNTYIYDYFLKRGYHECARALVKDESIKL) form the LisH domain. Over residues 75–84 (LNTEPPTKTS) the composition is skewed to polar residues. 4 disordered regions span residues 75–122 (LNTE…PNLA), 212–295 (GLSQ…SQAL), 424–726 (MMAR…DLSI), and 764–784 (GFDPNISYPTDGVETGAGDGL). A compositionally biased stretch (basic and acidic residues) spans 103–117 (DSKDGDKIKIPDDLP). Residues 215–233 (QQQIAQLQKNQQMHMMQQM) show a composition bias toward low complexity. Residues 234–244 (QREHSDMDMNG) are compositionally biased toward basic and acidic residues. Low complexity predominate over residues 247-259 (PQSPSSAENAPSP). A compositionally biased stretch (polar residues) spans 453–467 (SPQGSRAGTSPNPNE). The segment covering 564–592 (QQQQGQPMGPQQSPAQQPQSTGTPQTQNS) has biased composition (low complexity). A compositionally biased stretch (polar residues) spans 607–624 (RTSPQSQNAAPPTPQQAN). A compositionally biased stretch (basic and acidic residues) spans 629 to 638 (KKREPKDTAR). Composition is skewed to low complexity over residues 644-661 (KQPAAAAAAANTAATPSS) and 691-701 (PTTSAPQQPTS). Positions 702–715 (APAPQPIVQQPPPD) are enriched in pro residues.

This sequence belongs to the FLO8 family. In terms of assembly, interacts with ptaB.

It localises to the nucleus. Functionally, transcription factor that controls the expression of genes related to the process of conidiation and adherence and regulates biofilm formation. Controls conidiation and adhesion primarily by affecting the expression of the three regulatory genes flbB, stuA and medA. Required for virulence in an egg and a mouse infection model. This chain is Transcriptional activator somA, found in Aspergillus fumigatus (strain ATCC MYA-4609 / CBS 101355 / FGSC A1100 / Af293) (Neosartorya fumigata).